A 332-amino-acid polypeptide reads, in one-letter code: Torsin-1A (332 aa).

Positions 1–20 are cleaved as a signal peptide; it reads MKLGRAALGLLLLAPSVVQA. The segment at 91 to 251 is interaction with SNAPIN; it reads KPKKPLTLSL…VSVFNNKNSG (161 aa). 102 to 109 provides a ligand contact to ATP; the sequence is GWTGTGKN. Asn-143 and Asn-158 each carry an N-linked (GlcNAc...) asparagine glycan. Residues 251–332 are interaction with KLC1; that stretch reads GFWHSSLIDR…FTKLDYYYDD (82 aa). Residues 312-332 are interaction with SYNE3; that stretch reads RVFSDKGCKTVFTKLDYYYDD.

It belongs to the ClpA/ClpB family. Torsin subfamily. In terms of assembly, homohexamer. Interacts with TOR1B; the interaction may be specific of neural tissues. Interacts (ATP-bound) with TOR1AIP1 and TOR1AIP2; the interactions induce ATPase activity. Interacts with KLHL14; preferentially when ATP-free. Interacts with KLC1 (via TPR repeats); the interaction associates TOR1A with the kinesin oligomeric complex. Interacts with COPS4; the interaction associates TOR1A with the CSN complex. Interacts with SNAPIN; the interaction is direct and associates SNAPIN with the CSN complex. Interacts with STON2. Interacts (ATP-bound) with SYNE3 (via KASH domain); the interaction is required for SYNE3 nuclear envelope localization. Interacts with VIM; the interaction associates TOR1A with the cytoskeleton. Interacts with PLEC. Interacts (ATP-bound) with SLC6A3; regulates SLC6A3 transport to the plasma membrane. Post-translationally, N-glycosylated.

The protein resides in the endoplasmic reticulum lumen. It localises to the nucleus membrane. It is found in the cell projection. The protein localises to the growth cone. Its subcellular location is the cytoplasmic vesicle membrane. The protein resides in the cytoplasmic vesicle. It localises to the secretory vesicle. It is found in the synaptic vesicle. The protein localises to the cytoplasm. Its subcellular location is the cytoskeleton. The enzyme catalyses ATP + H2O = ADP + phosphate + H(+). Its function is as follows. Protein with chaperone functions important for the control of protein folding, processing, stability and localization as well as for the reduction of misfolded protein aggregates. Involved in the regulation of synaptic vesicle recycling, controls STON2 protein stability in collaboration with the COP9 signalosome complex (CSN). In the nucleus, may link the cytoskeleton with the nuclear envelope, this mechanism seems to be crucial for the control of nuclear polarity, cell movement and, specifically in neurons, nuclear envelope integrity. Participates in the cellular trafficking and may regulate the subcellular location of multipass membrane proteins such as the dopamine transporter SLC6A3, leading to the modulation of dopamine neurotransmission. In the endoplasmic reticulum, plays a role in the quality control of protein folding by increasing clearance of misfolded proteins such as SGCE variants or holding them in an intermediate state for proper refolding. May have a redundant function with TOR1B in non-neural tissues. The sequence is that of Torsin-1A (TOR1A) from Macaca fascicularis (Crab-eating macaque).